Consider the following 292-residue polypeptide: GTP cyclohydrolase FolE2 (292 aa).

The protein belongs to the GTP cyclohydrolase IV family.

The catalysed reaction is GTP + H2O = 7,8-dihydroneopterin 3'-triphosphate + formate + H(+). The protein operates within cofactor biosynthesis; 7,8-dihydroneopterin triphosphate biosynthesis; 7,8-dihydroneopterin triphosphate from GTP: step 1/1. In terms of biological role, converts GTP to 7,8-dihydroneopterin triphosphate. This chain is GTP cyclohydrolase FolE2, found in Staphylococcus aureus (strain Newman).